Here is a 457-residue protein sequence, read N- to C-terminus: MTKKVYVKTFGCQMNEYDSDKMVDVLNAAEGLEKTDTPEDADIILFNTCSVREKAQEKVFSDLGRVRELKEAKPDLLIGVGGCVASQEGASIVARAPYVDLVFGPQTLHRLPQMIDARRESGRAQVDITFPEIEKFDHLPPARVEGPSAFVSIMEGCSKYCSYCVVPYTRGDEVSRPLDDVLTEVAGLADQGVREVTLLGQNVNAYRGAIAAGSAEIADFATLIEYVADIPGIERIRYTTSHPKEFTQRLLDVYAKVPKLVDHLHLPVQHGSDRILMAMKRGYTVLEYKSVIRKLRAIRPNLSLSTDIIVGFPGETDADFDKTMALVHEMSYDTSFSFIYSPRPGTPAANLADDTPRELKLKRLQHLQATIEENVARISQSMLGKVERILVEGPSRKDPNELAGRTENNRVVNFPAPSAAHPRLIGQMIDVKINHAYPHSLRGELVLAHGDASAATH.

One can recognise an MTTase N-terminal domain in the interval 3-120; it reads KKVYVKTFGC…LPQMIDARRE (118 aa). Positions 12, 49, 83, 157, 161, and 164 each coordinate [4Fe-4S] cluster. The Radical SAM core domain occupies 143–377; it reads RVEGPSAFVS…QATIEENVAR (235 aa). The TRAM domain maps to 380-447; the sequence is QSMLGKVERI…PHSLRGELVL (68 aa).

Belongs to the methylthiotransferase family. MiaB subfamily. Monomer. [4Fe-4S] cluster serves as cofactor.

It localises to the cytoplasm. The enzyme catalyses N(6)-dimethylallyladenosine(37) in tRNA + (sulfur carrier)-SH + AH2 + 2 S-adenosyl-L-methionine = 2-methylsulfanyl-N(6)-dimethylallyladenosine(37) in tRNA + (sulfur carrier)-H + 5'-deoxyadenosine + L-methionine + A + S-adenosyl-L-homocysteine + 2 H(+). Its function is as follows. Catalyzes the methylthiolation of N6-(dimethylallyl)adenosine (i(6)A), leading to the formation of 2-methylthio-N6-(dimethylallyl)adenosine (ms(2)i(6)A) at position 37 in tRNAs that read codons beginning with uridine. The protein is tRNA-2-methylthio-N(6)-dimethylallyladenosine synthase of Burkholderia mallei (strain NCTC 10247).